A 310-amino-acid chain; its full sequence is tRNA dimethylallyltransferase (310 aa).

An ATP-binding site is contributed by 13–20; that stretch reads GPTASGKT. 15–20 serves as a coordination point for substrate; the sequence is TASGKT. Interaction with substrate tRNA stretches follow at residues 38–41, 162–166, 243–248, and 276–283; these read DSAL, QRLSR, RCVGYR, and KRQITWLR.

This sequence belongs to the IPP transferase family. As to quaternary structure, monomer. Mg(2+) serves as cofactor.

The catalysed reaction is adenosine(37) in tRNA + dimethylallyl diphosphate = N(6)-dimethylallyladenosine(37) in tRNA + diphosphate. Catalyzes the transfer of a dimethylallyl group onto the adenine at position 37 in tRNAs that read codons beginning with uridine, leading to the formation of N6-(dimethylallyl)adenosine (i(6)A). This Aliivibrio fischeri (strain ATCC 700601 / ES114) (Vibrio fischeri) protein is tRNA dimethylallyltransferase.